The following is a 199-amino-acid chain: Adenylate kinase (199 aa).

Residue 10–15 (GAGKGT) coordinates ATP. Positions 30-59 (STGDMLRAAVAARTPVGLQAKSIMESGGLV) are NMP. AMP-binding positions include threonine 31, arginine 36, 57-59 (GLV), 85-88 (GFPR), and glutamine 92. An LID region spans residues 126–142 (KRAAETLARGEAVRKDD). Arginine 127 contacts ATP. Arginine 139 and arginine 150 together coordinate AMP. Residue alanine 178 coordinates ATP.

This sequence belongs to the adenylate kinase family. In terms of assembly, monomer.

It localises to the cytoplasm. The enzyme catalyses AMP + ATP = 2 ADP. Its pathway is purine metabolism; AMP biosynthesis via salvage pathway; AMP from ADP: step 1/1. Its function is as follows. Catalyzes the reversible transfer of the terminal phosphate group between ATP and AMP. Plays an important role in cellular energy homeostasis and in adenine nucleotide metabolism. The chain is Adenylate kinase from Methylobacterium nodulans (strain LMG 21967 / CNCM I-2342 / ORS 2060).